The following is a 468-amino-acid chain: uncharacterized protein (468 aa).

Residues 447–468 (AVHVSNGDKPKVALPDTQLGSH) form a disordered region.

This sequence belongs to the mycobacterial PPE family.

This is an uncharacterized protein from Mycobacterium tuberculosis (strain CDC 1551 / Oshkosh).